Consider the following 1147-residue polypeptide: Lon protease homolog 2, peroxisomal (1147 aa).

The Lon N-terminal domain occupies 20–348 (LPTYKLDSNL…EVNRMLESMI (329 aa)). Disordered stretches follow at residues 395-444 (KPDK…DDDD) and 561-626 (KIES…SLTT). Residues 427–444 (DGNESNDEYDDDEDDDDD) are compositionally biased toward acidic residues. 2 stretches are compositionally biased toward basic and acidic residues: residues 561 to 574 (KIES…KKNE) and 582 to 597 (KNDK…RSDD). 651-658 (GPPGTGKT) is a binding site for ATP. The region spanning 903 to 1131 (SAKCGVVNGL…WDVIKAVWGD (229 aa)) is the Lon proteolytic domain. Catalysis depends on residues S1006 and K1049.

This sequence belongs to the peptidase S16 family.

It is found in the peroxisome matrix. It catalyses the reaction Hydrolysis of proteins in presence of ATP.. In terms of biological role, ATP-dependent serine protease that mediates the selective degradation of misfolded and unassembled polypeptides in the peroxisomal matrix. Necessary for type 2 peroxisome targeting signal (PTS2)-containing protein processing and facilitates peroxisome matrix protein import. In Debaryomyces hansenii (strain ATCC 36239 / CBS 767 / BCRC 21394 / JCM 1990 / NBRC 0083 / IGC 2968) (Yeast), this protein is Lon protease homolog 2, peroxisomal.